Consider the following 408-residue polypeptide: Putative transporter AmpG 2 (408 aa).

The next 12 helical transmembrane spans lie at 10 to 30, 49 to 69, 84 to 104, 109 to 129, 154 to 174, 177 to 197, 224 to 244, 261 to 281, 294 to 311, 315 to 337, 353 to 373, and 378 to 398; these read YISN…IYLL, IGLF…GPLL, YCLI…TNFN, FIPF…YDML, FRIG…IISW, VYRS…IYPL, WLII…LSIM, LGYK…GGFL, ALIY…LYFY, ITSL…SPFF, IALI…ISGY, and LGWT…YILI.

The protein belongs to the major facilitator superfamily.

It localises to the cell inner membrane. The sequence is that of Putative transporter AmpG 2 (ampG2) from Rickettsia felis (strain ATCC VR-1525 / URRWXCal2) (Rickettsia azadi).